Here is an 824-residue protein sequence, read N- to C-terminus: A-adding tRNA nucleotidyltransferase (824 aa).

2 CBS domains span residues 305–363 and 367–423; these read MNTP…DEPI and VNRD…LEKL. Residue 459–462 participates in ATP binding; sequence GVVR. Mg(2+) contacts are provided by Asp-472 and Asp-474. ATP contacts are provided by residues 545-546, Asn-550, 590-599, Arg-603, and Arg-632; these read RD and DPVRILRALR.

The protein belongs to the tRNA nucleotidyltransferase/poly(A) polymerase family. Mg(2+) serves as cofactor.

The enzyme catalyses a tRNA with a 3' CC end + ATP = a tRNA with a 3' CCA end + diphosphate. In terms of biological role, tRNA nucleotidyltransferase involved in the synthesis of the tRNA CCA terminus. Adds the terminal adenosine residue to tRNA. Can incorporate CMP into tRNA ending with C74C75 (tRNACC), with very weak efficiency. The chain is A-adding tRNA nucleotidyltransferase from Aquifex aeolicus (strain VF5).